The following is a 290-amino-acid chain: Membrane protein insertase YidC 1 (290 aa).

The signal sequence occupies residues 1-19; that stretch reads MKKKALLPLFLGIMIFLAG. C20 is lipidated: N-palmitoyl cysteine. The S-diacylglycerol cysteine moiety is linked to residue C20. 5 helical membrane-spanning segments follow: residues 56–76, 134–154, 176–196, 211–231, and 232–252; these read FGLA…PFML, MLGC…YFVL, PDIW…VVSS, MVIS…ALGL, and YWSV…IYYS. Positions 270–290 are disordered; it reads HNPYSKKKGKNTQVVSKKNKK. The span at 280 to 290 shows a compositional bias: polar residues; that stretch reads NTQVVSKKNKK.

Belongs to the OXA1/ALB3/YidC family. Type 2 subfamily.

The protein localises to the cell membrane. Required for the insertion and/or proper folding and/or complex formation of integral membrane proteins into the membrane. Involved in integration of membrane proteins that insert both dependently and independently of the Sec translocase complex, as well as at least some lipoproteins. This is Membrane protein insertase YidC 1 from Staphylococcus epidermidis (strain ATCC 12228 / FDA PCI 1200).